We begin with the raw amino-acid sequence, 427 residues long: MTAIIDIIGREILDSRGNPTVEVDVVLEDGALGRAAVPSGASTGAHEAVELRDGDKARYLGKGVTKAVGAVNGEIFEALSGLDVEQQAQIDQIMIDLDGTPNKSRLGANAILGVSLACAKAAANSLDMPLYRYVGGTSARLLPVPMMNIINGGVHADNPIDFQEFMILPVGASSFAEGLRYGAEVFHTLKSELKKAGHNTNVGDEGGFAPNLPSADAALEFVMNAIGKAGFKAGSDIVIGLDCASTEFFKDGKYVYEGEGKTRSISEQAKYLADLVARYPIVTIEDGMSEDDMDGWKELTDLIGKKCQLVGDDLFVTNVKRLAEGIKAGRANSILIKVNQIGTLTETLAAVEMAHKAGYTSVMSHRSGETEDSTIADLAVATNCGQIKTGSLARSDRTAKYNQLLRIEQQLGKQALYGGKAALKALA.

A (2R)-2-phosphoglycerate-binding site is contributed by glutamine 163. Glutamate 205 functions as the Proton donor in the catalytic mechanism. Mg(2+) is bound by residues aspartate 242, glutamate 285, and aspartate 312. (2R)-2-phosphoglycerate-binding residues include lysine 337, arginine 366, serine 367, and lysine 388. Lysine 337 acts as the Proton acceptor in catalysis.

Belongs to the enolase family. Mg(2+) serves as cofactor.

The protein resides in the cytoplasm. The protein localises to the secreted. Its subcellular location is the cell surface. The enzyme catalyses (2R)-2-phosphoglycerate = phosphoenolpyruvate + H2O. The protein operates within carbohydrate degradation; glycolysis; pyruvate from D-glyceraldehyde 3-phosphate: step 4/5. Its function is as follows. Catalyzes the reversible conversion of 2-phosphoglycerate (2-PG) into phosphoenolpyruvate (PEP). It is essential for the degradation of carbohydrates via glycolysis. This chain is Enolase, found in Bradyrhizobium diazoefficiens (strain JCM 10833 / BCRC 13528 / IAM 13628 / NBRC 14792 / USDA 110).